The primary structure comprises 293 residues: Cell division protein FtsQ (293 aa).

The Cytoplasmic portion of the chain corresponds to 1–27; sequence MRPLMRNRASERGVDPAPSRWAWRMQR. The helical transmembrane segment at 28 to 48 threads the bilayer; sequence LLLTPAFLLFLRAGVPVLVLF. Residues 49-293 lie on the Periplasmic side of the membrane; sequence GAATWWLSDT…WWEIRQVSRQ (245 aa). In terms of domain architecture, POTRA spans 81-149; the sequence is FMVQLMAVDG…GVLHIDVEPR (69 aa).

This sequence belongs to the FtsQ/DivIB family. FtsQ subfamily.

Its subcellular location is the cell inner membrane. In terms of biological role, essential cell division protein. This Roseobacter litoralis (strain ATCC 49566 / DSM 6996 / JCM 21268 / NBRC 15278 / OCh 149) protein is Cell division protein FtsQ.